The following is a 436-amino-acid chain: GTPase Der (436 aa).

2 EngA-type G domains span residues 4–167 (PIVA…NKES) and 176–351 (IRLS…ENHK). GTP-binding positions include 10-17 (GKPNVGKS), 57-61 (DTGGI), 119-122 (NKVD), 182-189 (GRPNVGKS), 229-233 (DTAGM), and 294-297 (NKWD). The region spanning 352 to 436 (KRVQSSTLNE…PIHIIPRKRN (85 aa)) is the KH-like domain.

It belongs to the TRAFAC class TrmE-Era-EngA-EngB-Septin-like GTPase superfamily. EngA (Der) GTPase family. As to quaternary structure, associates with the 50S ribosomal subunit.

Functionally, GTPase that plays an essential role in the late steps of ribosome biogenesis. The sequence is that of GTPase Der from Staphylococcus epidermidis (strain ATCC 35984 / DSM 28319 / BCRC 17069 / CCUG 31568 / BM 3577 / RP62A).